A 348-amino-acid polypeptide reads, in one-letter code: MAVTLGKNNMNIRQAIARVVTGADLSESEMMASMEEVMSGQASPAQIASFITALRMKGEAVEEIVGAVRVMRDKATFIDCGLGPDDILMDIVGTGGDGADTFNVSTTTSFVVAAAGVAVAKHGNRAVSSRCGSADVLEALGVDLSLDPATVARSVQEIGIGFLFAPLLHAAMKHAIVPRREMGIRTIFNILGPLTNPAGANVQLIGVFERSLTTVLAEVLLRLGERRSLVVWGEGNMDEMTVTGTSYIADAHDGRVTSYAVEPEDVGLARAAVADISGGRTPEESAQQVRAVLAGEKGARLDMVLLNAGAALLAAGRVETIVEGVVMARDVVESGAALKKLGQLVAFR.

5-phospho-alpha-D-ribose 1-diphosphate-binding positions include Gly93, 96–97, Thr101, 103–106, 121–129, and Ser133; these read GD, NVST, and KHGNRAVSS. Residue Gly93 coordinates anthranilate. Ser105 is a binding site for Mg(2+). Asn124 lines the anthranilate pocket. Arg179 provides a ligand contact to anthranilate. Residues Asp238 and Glu239 each coordinate Mg(2+).

This sequence belongs to the anthranilate phosphoribosyltransferase family. In terms of assembly, homodimer. The cofactor is Mg(2+).

The enzyme catalyses N-(5-phospho-beta-D-ribosyl)anthranilate + diphosphate = 5-phospho-alpha-D-ribose 1-diphosphate + anthranilate. It functions in the pathway amino-acid biosynthesis; L-tryptophan biosynthesis; L-tryptophan from chorismate: step 2/5. In terms of biological role, catalyzes the transfer of the phosphoribosyl group of 5-phosphorylribose-1-pyrophosphate (PRPP) to anthranilate to yield N-(5'-phosphoribosyl)-anthranilate (PRA). The protein is Anthranilate phosphoribosyltransferase of Desulfotalea psychrophila (strain LSv54 / DSM 12343).